Here is a 504-residue protein sequence, read N- to C-terminus: MSVPKFNDLSFYSDPSAHKSRYANLVKTFKSKYPNDEIEFFARSPGRVNLIGDHIDYNYFPVLPMAIEVDVVAAVSTNNNDMIVIANTDSAKFPKETVSLAEEFTIDREHHTWANYFKCGLIVASKFLQEKAMTKLKGMNITFSGTVPTGGGLSSSAAFCVASTLAVLYANGVEDISKADLTRITVVSEHYLGLNNGGMDQCASVYGEQGKALFIQFKPQLKGTPFEFPVKNLTFVITNSLQVSNKYETAPIHYNLRVVEMAIAGDLLAKKLNVEGKEGIVKDSNVDTYSLRGVMDGYCGAWDGEDLDVGVVHLEKMIDVVGKTLTKEGGYTVEQCCEEMGLTPEEFHSRYLKKIPVKFDVLKLYERALHVYRESLRVLKTLQLLSTVVDASQFLQTFGSLMNESQHDLDILNESSNPKLNEICSIALANGAYGSRVTGAGWGGSIVHLTTTENLPKLTKSLEAYYKREFPGITDEEIREAVIDSKPATGSCLVKLDFSHALQG.

Residues Arg47, Asp53, His54, and Asp56 each contribute to the alpha-D-galactose site. The ATP site is built by Gly150, Gly152, Ser154, and Ser155. The alpha-D-galactose site is built by Asn196 and Asp200. Asp200 functions as the Proton acceptor in the catalytic mechanism. 3 residues coordinate ATP: Ser244, Asn245, and Lys246. An alpha-D-galactose-binding site is contributed by Tyr254.

The protein belongs to the GHMP kinase family. GalK subfamily.

It carries out the reaction alpha-D-galactose + ATP = alpha-D-galactose 1-phosphate + ADP + H(+). It functions in the pathway carbohydrate metabolism; galactose metabolism. In terms of biological role, galactokinase is a key enzyme in the galactose metabolism where it catalyzes the conversion of alpha-D-galactose to galactose 1-phosphate. Can also induce the transcription of the gal genes in response to the organism being challenged with galactose as the sole source of carbon. In Candida parapsilosis (Yeast), this protein is Galactokinase.